A 111-amino-acid chain; its full sequence is Nucleoid-associated protein VF_1686 (111 aa).

Disordered stretches follow at residues 1–23 and 89–111; these read MFGG…DRMQ and TQKE…KMPF.

It belongs to the YbaB/EbfC family. In terms of assembly, homodimer.

The protein localises to the cytoplasm. Its subcellular location is the nucleoid. Binds to DNA and alters its conformation. May be involved in regulation of gene expression, nucleoid organization and DNA protection. In Aliivibrio fischeri (strain ATCC 700601 / ES114) (Vibrio fischeri), this protein is Nucleoid-associated protein VF_1686.